We begin with the raw amino-acid sequence, 129 residues long: Putative membrane protein insertion efficiency factor (129 aa).

It belongs to the UPF0161 family.

The protein resides in the cell inner membrane. Functionally, could be involved in insertion of integral membrane proteins into the membrane. This Rhodopseudomonas palustris (strain ATCC BAA-98 / CGA009) protein is Putative membrane protein insertion efficiency factor.